Reading from the N-terminus, the 647-residue chain is UvrABC system protein C (647 aa).

A GIY-YIG domain is found at 26–106 (SEPGCYLMRD…IKEHQPYFNI (81 aa)). The UVR domain occupies 216-251 (DQLKDLLHKQMLIQSKLQEFEKAAIIRDQIKGIEQL).

Belongs to the UvrC family. In terms of assembly, interacts with UvrB in an incision complex.

It is found in the cytoplasm. In terms of biological role, the UvrABC repair system catalyzes the recognition and processing of DNA lesions. UvrC both incises the 5' and 3' sides of the lesion. The N-terminal half is responsible for the 3' incision and the C-terminal half is responsible for the 5' incision. The protein is UvrABC system protein C of Prochlorococcus marinus (strain MIT 9211).